We begin with the raw amino-acid sequence, 1583 residues long: Pentafunctional AROM polypeptide (1583 aa).

The interval 1–384 is 3-dehydroquinate synthase; the sequence is MSNPTKISIL…YETRASVVAN (384 aa). Residues 44 to 46, 81 to 84, 114 to 116, and Asp119 contribute to the NAD(+) site; these read DTN, EVSK, and GGV. Position 130 (Arg130) interacts with 7-phospho-2-dehydro-3-deoxy-D-arabino-heptonate. 139 to 140 serves as a coordination point for NAD(+); sequence TT. Residues Asp146 and Lys152 each contribute to the 7-phospho-2-dehydro-3-deoxy-D-arabino-heptonate site. Lys161 serves as a coordination point for NAD(+). Asn162 lines the 7-phospho-2-dehydro-3-deoxy-D-arabino-heptonate pocket. Residues 179-182 and Asn190 contribute to the NAD(+) site; that span reads FLET. Residue Glu194 coordinates Zn(2+). 7-phospho-2-dehydro-3-deoxy-D-arabino-heptonate-binding positions include 194 to 197 and Lys250; that span reads EVIK. Glu260 serves as the catalytic Proton acceptor; for 3-dehydroquinate synthase activity. Residues 264-268 and His271 contribute to the 7-phospho-2-dehydro-3-deoxy-D-arabino-heptonate site; that span reads RNLLN. A Zn(2+)-binding site is contributed by His271. The active-site Proton acceptor; for 3-dehydroquinate synthase activity is the His275. 7-phospho-2-dehydro-3-deoxy-D-arabino-heptonate is bound by residues His287 and Lys356. His287 is a Zn(2+) binding site. An EPSP synthase region spans residues 397 to 842; sequence VHPGVAQSSN…WDTLRQLFKV (446 aa). Cys824 serves as the catalytic For EPSP synthase activity. A shikimate kinase region spans residues 863–1055; the sequence is NASIYIIGMR…KEKEHSFFAS (193 aa). 870–877 contributes to the ATP binding site; that stretch reads GMRGAGKS. Positions 1056–1276 are 3-dehydroquinase; that stretch reads LTLPDLREAG…AAPGQLSATE (221 aa). His1179 functions as the Proton acceptor; for 3-dehydroquinate dehydratase activity in the catalytic mechanism. The active-site Schiff-base intermediate with substrate; for 3-dehydroquinate dehydratase activity is the Lys1207. A shikimate dehydrogenase region spans residues 1289–1583; sequence PKKFAIFGSP…SARACSSPLI (295 aa).

This sequence in the N-terminal section; belongs to the sugar phosphate cyclases superfamily. Dehydroquinate synthase family. The protein in the 2nd section; belongs to the EPSP synthase family. It in the 3rd section; belongs to the shikimate kinase family. In the 4th section; belongs to the type-I 3-dehydroquinase family. This sequence in the C-terminal section; belongs to the shikimate dehydrogenase family. In terms of assembly, homodimer. Requires Zn(2+) as cofactor.

The protein resides in the cytoplasm. It catalyses the reaction 7-phospho-2-dehydro-3-deoxy-D-arabino-heptonate = 3-dehydroquinate + phosphate. It carries out the reaction 3-dehydroquinate = 3-dehydroshikimate + H2O. The catalysed reaction is shikimate + NADP(+) = 3-dehydroshikimate + NADPH + H(+). The enzyme catalyses shikimate + ATP = 3-phosphoshikimate + ADP + H(+). It catalyses the reaction 3-phosphoshikimate + phosphoenolpyruvate = 5-O-(1-carboxyvinyl)-3-phosphoshikimate + phosphate. It participates in metabolic intermediate biosynthesis; chorismate biosynthesis; chorismate from D-erythrose 4-phosphate and phosphoenolpyruvate: step 2/7. The protein operates within metabolic intermediate biosynthesis; chorismate biosynthesis; chorismate from D-erythrose 4-phosphate and phosphoenolpyruvate: step 3/7. Its pathway is metabolic intermediate biosynthesis; chorismate biosynthesis; chorismate from D-erythrose 4-phosphate and phosphoenolpyruvate: step 4/7. It functions in the pathway metabolic intermediate biosynthesis; chorismate biosynthesis; chorismate from D-erythrose 4-phosphate and phosphoenolpyruvate: step 5/7. It participates in metabolic intermediate biosynthesis; chorismate biosynthesis; chorismate from D-erythrose 4-phosphate and phosphoenolpyruvate: step 6/7. In terms of biological role, the AROM polypeptide catalyzes 5 consecutive enzymatic reactions in prechorismate polyaromatic amino acid biosynthesis. This is Pentafunctional AROM polypeptide (aromA) from Emericella nidulans (strain FGSC A4 / ATCC 38163 / CBS 112.46 / NRRL 194 / M139) (Aspergillus nidulans).